A 337-amino-acid polypeptide reads, in one-letter code: Glyceraldehyde-3-phosphate dehydrogenase (337 aa).

NAD(+) is bound by residues 17 to 18 (RI), D39, K83, and S125. Residues 156-158 (SCT), T187, R202, 215-216 (TG), and R238 contribute to the D-glyceraldehyde 3-phosphate site. C157 (nucleophile) is an active-site residue. Position 319 (N319) interacts with NAD(+).

It belongs to the glyceraldehyde-3-phosphate dehydrogenase family. As to quaternary structure, homotetramer.

It localises to the cytoplasm. It carries out the reaction D-glyceraldehyde 3-phosphate + phosphate + NAD(+) = (2R)-3-phospho-glyceroyl phosphate + NADH + H(+). It functions in the pathway carbohydrate degradation; glycolysis; pyruvate from D-glyceraldehyde 3-phosphate: step 1/5. Functionally, catalyzes the oxidative phosphorylation of glyceraldehyde 3-phosphate (G3P) to 1,3-bisphosphoglycerate (BPG) using the cofactor NAD. The first reaction step involves the formation of a hemiacetal intermediate between G3P and a cysteine residue, and this hemiacetal intermediate is then oxidized to a thioester, with concomitant reduction of NAD to NADH. The reduced NADH is then exchanged with the second NAD, and the thioester is attacked by a nucleophilic inorganic phosphate to produce BPG. The sequence is that of Glyceraldehyde-3-phosphate dehydrogenase (gapA) from Mycoplasma pneumoniae (strain ATCC 29342 / M129 / Subtype 1) (Mycoplasmoides pneumoniae).